Consider the following 384-residue polypeptide: Acetylgalactosaminyl-O-glycosyl-glycoprotein beta-1,3-N-acetylglucosaminyltransferase (384 aa).

The Cytoplasmic portion of the chain corresponds to Met1 to Lys12. Residues Thr13–Leu31 form a helical; Signal-anchor for type II membrane protein membrane-spanning segment. Residues Gln32–Ser384 lie on the Lumenal side of the membrane. The disordered stretch occupies residues Pro34–Pro68. 3 N-linked (GlcNAc...) asparagine glycosylation sites follow: Asn73, Asn77, and Asn196.

This sequence belongs to the glycosyltransferase 31 family. As to expression, present in stomach and colon (at protein level). Restricted in the stomach, colon and small intestine, where core 3 structure is present.

The protein localises to the golgi apparatus membrane. The enzyme catalyses a 3-O-[N-acetyl-alpha-D-galactosaminyl]-L-threonyl-[protein] + UDP-N-acetyl-alpha-D-glucosamine = a 3-O-[N-acetyl-beta-D-glucosaminyl-(1-&gt;3)-N-acetyl-alpha-D-galactosaminyl]-L-threonyl-[protein] + UDP + H(+). It catalyses the reaction a 3-O-[N-acetyl-alpha-D-galactosaminyl]-L-seryl-[protein] + UDP-N-acetyl-alpha-D-glucosamine = 3-O-[N-acetyl-beta-D-glucosaminyl-(1-&gt;3)-N-acetyl-alpha-D-galactosaminyl]-L-seryl-[protein] + UDP + H(+). It functions in the pathway protein modification; protein glycosylation. Its function is as follows. Beta-1,3-N-acetylglucosaminyltransferase that synthesizes the core 3 structure of the O-glycan, an important precursor in the biosynthesis of mucin-type glycoproteins. Plays an important role in the synthesis of mucin-type O-glycans in digestive organs. The sequence is that of Acetylgalactosaminyl-O-glycosyl-glycoprotein beta-1,3-N-acetylglucosaminyltransferase (B3GNT6) from Homo sapiens (Human).